A 257-amino-acid polypeptide reads, in one-letter code: MNINDKPIGFFDSGVGGISVLKEAFKLLPKEDFLYYGDSKNAPYGTKKVEEVKTLTFNATDFLMNKGIKALVVACNTATSVTINDLRENYDIPIIGIEPALKPAVELKKGGKIIIMATPMTLAEKKFANLMDLYKETEDIEPLPCPGLPELIEQGIVSGDVIYNYLKDKFSKYDNEKISSIVLGCTHYPFIEETLKEVTHNKACIIDGSFGTSRELKRQLKNSNMLREENRVGKVTIFNSREDRDIIDLSYKLFNMK.

Substrate contacts are provided by residues 12–13 (DS) and 44–45 (YG). Residue C75 is the Proton donor/acceptor of the active site. 76-77 (NT) is a substrate binding site. Residue C185 is the Proton donor/acceptor of the active site. 186–187 (TH) provides a ligand contact to substrate.

Belongs to the aspartate/glutamate racemases family.

It catalyses the reaction L-glutamate = D-glutamate. It functions in the pathway cell wall biogenesis; peptidoglycan biosynthesis. In terms of biological role, provides the (R)-glutamate required for cell wall biosynthesis. In Clostridium botulinum (strain Loch Maree / Type A3), this protein is Glutamate racemase.